A 213-amino-acid chain; its full sequence is Putative thymidylate kinase 251L (213 aa).

Position 21 to 28 (21 to 28) interacts with ATP; it reads GCDKTGKS.

This sequence belongs to the thymidylate kinase family.

It catalyses the reaction dTMP + ATP = dTDP + ADP. It participates in pyrimidine metabolism; dTTP biosynthesis. In terms of biological role, catalyzes the conversion of dTMP to dTDP. The chain is Putative thymidylate kinase 251L from Acheta domesticus (House cricket).